Here is a 611-residue protein sequence, read N- to C-terminus: Protein ral2 (611 aa).

Kelch repeat units lie at residues Glu-43–Asp-91, Lys-96–Gly-149, and Tyr-175–Lys-224. Ser-604 bears the Phosphoserine mark.

Functionally, essential for mating and for recognition of the mating pheromone, and for the determination of cell shape. Implicated in activation of the ras1 protein. This chain is Protein ral2 (ral2), found in Schizosaccharomyces pombe (strain 972 / ATCC 24843) (Fission yeast).